The primary structure comprises 1726 residues: Merozoite surface protein 1 (1726 aa).

The first 19 residues, Met1–Cys19, serve as a signal peptide directing secretion. The span at Lys61 to Ser124 shows a compositional bias: low complexity. The interval Lys61 to Ala149 is disordered. Polar residues predominate over residues Arg125–Thr134. Asn133 carries N-linked (GlcNAc...) asparagine glycosylation. The segment covering Ser135 to Ala144 has biased composition (low complexity). Residues Asn272, Asn501, Asn567, and Asn638 are each glycosylated (N-linked (GlcNAc...) asparagine). A disordered region spans residues Ser735–Thr771. The segment covering Glu755–Glu765 has biased composition (acidic residues). N-linked (GlcNAc...) asparagine glycosylation is found at Asn827, Asn924, Asn944, Asn990, Asn1016, Asn1114, and Asn1221. Residues Thr914 to Asn952 are compositionally biased toward low complexity. The tract at residues Thr914–Ala961 is disordered. 2 disordered regions span residues Val1254–Pro1284 and Lys1476–Lys1497. Over residues Val1270–Pro1284 the composition is skewed to polar residues. Pro residues predominate over residues Ser1481–Pro1490. Asn1613 carries an N-linked (GlcNAc...) asparagine glycan. 2 consecutive EGF-like domains span residues His1617 to Pro1657 and Asn1658 to Ser1705. 6 disulfide bridges follow: Cys1619–Cys1630, Cys1624–Cys1640, Cys1642–Cys1653, Cys1661–Cys1674, Cys1668–Cys1688, and Cys1690–Cys1704. Ser1705 is lipidated: GPI-anchor amidated serine. The propeptide at Ser1706–Ile1726 is removed in mature form.

Forms a complex composed of subunits p83, p30, p38, and p42 which remain non-covalently associated; the complex is formed at the merozoite surface prior to egress from host erythrocytes. Forms a complex composed of processed MSP1 subunits, MSP6 subunit p36 and MSP7; the complex is formed at the merozoite surface prior to egress from host erythrocytes. Within the complex, interacts (via subunit p38) with MSP6 subunit p36 and (via subunits p83, p30 and p38) with MSP7 (via subunit p22). Forms a complex composed of MSP1, MSP6, DBLMSP1 and DBLMSP2. Within the complex, interacts (via subunit p38) with DBLMSP1 and DBLMSP2. Forms a complex composed of MSP1, and rhoptry proteins RhopH3, RAP1 and CLAG9/RhopH3. Within the complex, interacts (via subunits p42 and p19) with RhopH3 (via C-terminus). Forms a complex composed of MSP1, MSP6, MSP7, MSP9 and MSP3; within the complex, MSP6 and MSP9 mediate the binding to the host erythrocyte. Interacts (via subunits p19 and p42) with MSP9; the interaction is direct; MSP1 subunits p19 or p42, and MSP9 form a co-ligand complex that interacts with host SLC4A1/Band 3 protein. May interact with PFD6. Interacts with host spectrin. As to quaternary structure, interacts with host glycophorin GYPA in a sialic acid-independent manner. In terms of assembly, interacts with host proinflammatory cytokine S100P; the interaction blocks S100P inflammatory and chemotactic activities. Interacts with host SLC4A1/Band 3 (via 5ABC region) on the host erythrocyte surface in a sialic acid-independent manner. Post-translationally, the p190 precursor is cleaved by SUB1 prior to merozoite egress into 4 subunits p83, p30, p38, and p42 which remain non-covalently associated. SUB1-mediated proteolytic cleavage occurs in an orderly manner; the first cleavage occurs at the p30/p38 site, followed by cleavage at the p83/p30 site, the last cleavage occurs at the p38/p42 site. The order of cleavage is essential for parasite viability. SUB1-mediated processing is essential for merozoite egress. In a second processing step during erythrocyte invasion, p42 is cleaved by SUB2 into p33 and p19; the latter remains attached to the merozoite surface via its GPI-anchor and is endocytosed during the subsequent ring stage.

Its subcellular location is the cell membrane. It is found in the secreted. The protein localises to the vacuole membrane. Its function is as follows. During the asexual blood stage, involved in merozoite egress from host erythrocytes possibly via its interaction with the host cytoskeleton protein spectrin resulting in the destabilization of the host cytoskeleton and thus leading to erythrocyte cell membrane rupture. Involved in the binding to host erythrocytes and is required for host erythrocyte invasion. Functionally, by binding to host proinflammatory cytokine S100P may interfere with host immune responses. In terms of biological role, involved in merozoite invasion of host erythrocytes. May play a role in the biogenesis and/or function of the food vacuole during the intraerythrocytic development. The protein is Merozoite surface protein 1 of Plasmodium falciparum (isolate Palo Alto / Uganda).